The sequence spans 96 residues: ATP synthase subunit c (96 aa).

Helical transmembrane passes span 9-29 and 58-78; these read FIAC…GCGI and IGLA…LILI.

The protein belongs to the ATPase C chain family. F-type ATPases have 2 components, F(1) - the catalytic core - and F(0) - the membrane proton channel. F(1) has five subunits: alpha(3), beta(3), gamma(1), delta(1), epsilon(1). F(0) has three main subunits: a(1), b(2) and c(10-14). The alpha and beta chains form an alternating ring which encloses part of the gamma chain. F(1) is attached to F(0) by a central stalk formed by the gamma and epsilon chains, while a peripheral stalk is formed by the delta and b chains.

The protein localises to the cell inner membrane. Functionally, f(1)F(0) ATP synthase produces ATP from ADP in the presence of a proton or sodium gradient. F-type ATPases consist of two structural domains, F(1) containing the extramembraneous catalytic core and F(0) containing the membrane proton channel, linked together by a central stalk and a peripheral stalk. During catalysis, ATP synthesis in the catalytic domain of F(1) is coupled via a rotary mechanism of the central stalk subunits to proton translocation. Its function is as follows. Key component of the F(0) channel; it plays a direct role in translocation across the membrane. A homomeric c-ring of between 10-14 subunits forms the central stalk rotor element with the F(1) delta and epsilon subunits. This chain is ATP synthase subunit c, found in Desulfosudis oleivorans (strain DSM 6200 / JCM 39069 / Hxd3) (Desulfococcus oleovorans).